Here is a 741-residue protein sequence, read N- to C-terminus: Phosphoribosylformylglycinamidine synthase subunit PurL (741 aa).

The active site involves His-53. Tyr-56 and Lys-95 together coordinate ATP. A Mg(2+)-binding site is contributed by Glu-97. Substrate-binding positions include 98–101 (SHNH) and Arg-120. The active-site Proton acceptor is the His-99. Asp-121 serves as a coordination point for Mg(2+). Gln-244 lines the substrate pocket. Asp-274 serves as a coordination point for Mg(2+). Substrate is bound at residue 318-320 (ESQ). Residues Asp-501 and Gly-538 each coordinate ATP. Asn-539 contributes to the Mg(2+) binding site. Residue Ser-541 coordinates substrate.

It belongs to the FGAMS family. In terms of assembly, monomer. Part of the FGAM synthase complex composed of 1 PurL, 1 PurQ and 2 PurS subunits.

Its subcellular location is the cytoplasm. It carries out the reaction N(2)-formyl-N(1)-(5-phospho-beta-D-ribosyl)glycinamide + L-glutamine + ATP + H2O = 2-formamido-N(1)-(5-O-phospho-beta-D-ribosyl)acetamidine + L-glutamate + ADP + phosphate + H(+). The protein operates within purine metabolism; IMP biosynthesis via de novo pathway; 5-amino-1-(5-phospho-D-ribosyl)imidazole from N(2)-formyl-N(1)-(5-phospho-D-ribosyl)glycinamide: step 1/2. Its function is as follows. Part of the phosphoribosylformylglycinamidine synthase complex involved in the purines biosynthetic pathway. Catalyzes the ATP-dependent conversion of formylglycinamide ribonucleotide (FGAR) and glutamine to yield formylglycinamidine ribonucleotide (FGAM) and glutamate. The FGAM synthase complex is composed of three subunits. PurQ produces an ammonia molecule by converting glutamine to glutamate. PurL transfers the ammonia molecule to FGAR to form FGAM in an ATP-dependent manner. PurS interacts with PurQ and PurL and is thought to assist in the transfer of the ammonia molecule from PurQ to PurL. The sequence is that of Phosphoribosylformylglycinamidine synthase subunit PurL from Limosilactobacillus fermentum (strain NBRC 3956 / LMG 18251) (Lactobacillus fermentum).